We begin with the raw amino-acid sequence, 158 residues long: Transcription elongation factor GreA (158 aa).

The segment at 41-61 is disordered; sequence GDLSENAEYHAAKEDQSHNEG. Positions 51 to 74 form a coiled coil; the sequence is AAKEDQSHNEGRIAELEDKLARAE.

The protein belongs to the GreA/GreB family.

Necessary for efficient RNA polymerase transcription elongation past template-encoded arresting sites. The arresting sites in DNA have the property of trapping a certain fraction of elongating RNA polymerases that pass through, resulting in locked ternary complexes. Cleavage of the nascent transcript by cleavage factors such as GreA or GreB allows the resumption of elongation from the new 3'terminus. GreA releases sequences of 2 to 3 nucleotides. This is Transcription elongation factor GreA from Nitrobacter hamburgensis (strain DSM 10229 / NCIMB 13809 / X14).